The chain runs to 785 residues: ATP-dependent 6-phosphofructokinase 1 (785 aa).

Positions 1 to 389 (MATTHAPAEP…YHFAYKNTAT (389 aa)) are N-terminal catalytic PFK domain 1. ATP contacts are provided by residues Gly-23, 86 to 87 (RS), and 116 to 119 (GDGS). Asp-117 contributes to the Mg(2+) binding site. Substrate contacts are provided by residues 162–164 (SID), Arg-199, 206–208 (MGR), Glu-263, Arg-291, and 297–300 (HTQR). Residue Asp-164 is the Proton acceptor of the active site. The tract at residues 390 to 403 (PDHPKLILPENKRM) is interdomain linker. The segment at 404–785 (RIAIIHVGAP…KTGWSCYENC (382 aa)) is C-terminal regulatory PFK domain 2. Beta-D-fructose 2,6-bisphosphate contacts are provided by residues Arg-480, 537 to 541 (TISNN), Arg-575, 582 to 584 (QGG), Glu-642, Arg-668, 674 to 677 (HFQQ), and Arg-749.

It belongs to the phosphofructokinase type A (PFKA) family. ATP-dependent PFK group I subfamily. Eukaryotic two domain clade 'E' sub-subfamily. Homotetramer. Mg(2+) is required as a cofactor.

Its subcellular location is the cytoplasm. The catalysed reaction is beta-D-fructose 6-phosphate + ATP = beta-D-fructose 1,6-bisphosphate + ADP + H(+). It participates in carbohydrate degradation; glycolysis; D-glyceraldehyde 3-phosphate and glycerone phosphate from D-glucose: step 3/4. Its activity is regulated as follows. Allosterically activated by ADP, AMP, or fructose 2,6-bisphosphate, and allosterically inhibited by ATP or citrate. In terms of biological role, catalyzes the phosphorylation of D-fructose 6-phosphate to fructose 1,6-bisphosphate by ATP, the first committing step of glycolysis. This is ATP-dependent 6-phosphofructokinase 1 (pfkA) from Aspergillus oryzae (strain ATCC 42149 / RIB 40) (Yellow koji mold).